We begin with the raw amino-acid sequence, 609 residues long: UvrABC system protein C (609 aa).

The region spanning 15–92 is the GIY-YIG domain; it reads TGSGVYQMQD…IKQFRPRYNV (78 aa). The 36-residue stretch at 202–237 folds into the UVR domain; it reads DQVIIKLTERMEVASENLVFEEAAHYRDQIRQLRRL.

It belongs to the UvrC family. As to quaternary structure, interacts with UvrB in an incision complex.

It localises to the cytoplasm. Its function is as follows. The UvrABC repair system catalyzes the recognition and processing of DNA lesions. UvrC both incises the 5' and 3' sides of the lesion. The N-terminal half is responsible for the 3' incision and the C-terminal half is responsible for the 5' incision. The protein is UvrABC system protein C of Coxiella burnetii (strain RSA 331 / Henzerling II).